Consider the following 133-residue polypeptide: Small ribosomal subunit protein uS8 (133 aa).

Belongs to the universal ribosomal protein uS8 family. In terms of assembly, part of the 30S ribosomal subunit. Contacts proteins S5 and S12.

In terms of biological role, one of the primary rRNA binding proteins, it binds directly to 16S rRNA central domain where it helps coordinate assembly of the platform of the 30S subunit. The polypeptide is Small ribosomal subunit protein uS8 (Prochlorococcus marinus (strain MIT 9301)).